The sequence spans 248 residues: Aliphatic sulfonates import ATP-binding protein SsuB 2 (248 aa).

The ABC transporter domain occupies 14–230 (VRVESLVRSF…DHGHRRFGEI (217 aa)). ATP is bound at residue 46–53 (GRSGSGKS).

This sequence belongs to the ABC transporter superfamily. Aliphatic sulfonates importer (TC 3.A.1.17.2) family. In terms of assembly, the complex is composed of two ATP-binding proteins (SsuB), two transmembrane proteins (SsuC) and a solute-binding protein (SsuA).

It is found in the cell inner membrane. The enzyme catalyses ATP + H2O + aliphatic sulfonate-[sulfonate-binding protein]Side 1 = ADP + phosphate + aliphatic sulfonateSide 2 + [sulfonate-binding protein]Side 1.. In terms of biological role, part of the ABC transporter complex SsuABC involved in aliphatic sulfonates import. Responsible for energy coupling to the transport system. The polypeptide is Aliphatic sulfonates import ATP-binding protein SsuB 2 (Mesorhizobium japonicum (strain LMG 29417 / CECT 9101 / MAFF 303099) (Mesorhizobium loti (strain MAFF 303099))).